The primary structure comprises 715 residues: Polyribonucleotide nucleotidyltransferase (715 aa).

Aspartate 491 and aspartate 497 together coordinate Mg(2+). Residues 558 to 617 enclose the KH domain; the sequence is PKIMTMTINPEKIRDVIGPQGRVINKIIEETGVKIDIEQDGRVFIASINHEANLRAKQII. One can recognise an S1 motif domain in the interval 627 to 695; sequence GQVYLGTVKR…DQGRVNLSRK (69 aa).

The protein belongs to the polyribonucleotide nucleotidyltransferase family. Requires Mg(2+) as cofactor.

Its subcellular location is the cytoplasm. The enzyme catalyses RNA(n+1) + phosphate = RNA(n) + a ribonucleoside 5'-diphosphate. Involved in mRNA degradation. Catalyzes the phosphorolysis of single-stranded polyribonucleotides processively in the 3'- to 5'-direction. In Brevibacillus brevis (strain 47 / JCM 6285 / NBRC 100599), this protein is Polyribonucleotide nucleotidyltransferase.